We begin with the raw amino-acid sequence, 436 residues long: Trigger factor (436 aa).

In terms of domain architecture, PPIase FKBP-type spans 161-255 (DDVAIIDFKT…VKEVREKQLP (95 aa)).

It belongs to the FKBP-type PPIase family. Tig subfamily.

Its subcellular location is the cytoplasm. It carries out the reaction [protein]-peptidylproline (omega=180) = [protein]-peptidylproline (omega=0). Its function is as follows. Involved in protein export. Acts as a chaperone by maintaining the newly synthesized protein in an open conformation. Functions as a peptidyl-prolyl cis-trans isomerase. The sequence is that of Trigger factor from Akkermansia muciniphila (strain ATCC BAA-835 / DSM 22959 / JCM 33894 / BCRC 81048 / CCUG 64013 / CIP 107961 / Muc).